Reading from the N-terminus, the 274-residue chain is NADPH-dependent 7-cyano-7-deazaguanine reductase (274 aa).

Residue 80 to 82 (VES) coordinates substrate. An NADPH-binding site is contributed by 82–83 (SK). Residue cysteine 181 is the Thioimide intermediate of the active site. Aspartate 188 serves as the catalytic Proton donor. 220–221 (HE) is a binding site for substrate. 249-250 (RG) provides a ligand contact to NADPH.

Belongs to the GTP cyclohydrolase I family. QueF type 2 subfamily. Homodimer.

It localises to the cytoplasm. The catalysed reaction is 7-aminomethyl-7-carbaguanine + 2 NADP(+) = 7-cyano-7-deazaguanine + 2 NADPH + 3 H(+). Its pathway is tRNA modification; tRNA-queuosine biosynthesis. Its function is as follows. Catalyzes the NADPH-dependent reduction of 7-cyano-7-deazaguanine (preQ0) to 7-aminomethyl-7-deazaguanine (preQ1). The protein is NADPH-dependent 7-cyano-7-deazaguanine reductase of Burkholderia pseudomallei (strain 1106a).